Consider the following 892-residue polypeptide: UPF0182 protein MCA2716 (892 aa).

7 helical membrane-spanning segments follow: residues 7–27 (LLTS…AIVL), 57–77 (ILSG…FWAA), 107–127 (GALP…ALPF), 163–183 (ILVL…VMVA), 206–226 (IHLN…YVLQ), 252–272 (LPLI…ALWF), and 281–301 (LALT…IDVV).

The protein belongs to the UPF0182 family.

It localises to the cell membrane. In Methylococcus capsulatus (strain ATCC 33009 / NCIMB 11132 / Bath), this protein is UPF0182 protein MCA2716.